The sequence spans 430 residues: Phosphomethylpyrimidine synthase (430 aa).

Residues Asn-67, Met-96, Tyr-125, His-161, 183–185 (SRG), 224–227 (DALR), and Glu-263 contribute to the substrate site. His-267 provides a ligand contact to Zn(2+). Position 290 (Tyr-290) interacts with substrate. His-331 contacts Zn(2+). The [4Fe-4S] cluster site is built by Cys-406, Cys-409, and Cys-413.

It belongs to the ThiC family. Homodimer. Requires [4Fe-4S] cluster as cofactor.

It catalyses the reaction 5-amino-1-(5-phospho-beta-D-ribosyl)imidazole + S-adenosyl-L-methionine = 4-amino-2-methyl-5-(phosphooxymethyl)pyrimidine + CO + 5'-deoxyadenosine + formate + L-methionine + 3 H(+). Its pathway is cofactor biosynthesis; thiamine diphosphate biosynthesis. In terms of biological role, catalyzes the synthesis of the hydroxymethylpyrimidine phosphate (HMP-P) moiety of thiamine from aminoimidazole ribotide (AIR) in a radical S-adenosyl-L-methionine (SAM)-dependent reaction. This chain is Phosphomethylpyrimidine synthase, found in Campylobacter jejuni (strain RM1221).